The chain runs to 191 residues: Flavin reductase (NADH) (191 aa).

An FAD-binding site is contributed by Tyr46 to Ala52. An NAD(+)-binding site is contributed by Ser55. An FAD-binding site is contributed by Arg72–Val73. NAD(+) is bound by residues His144 and Tyr166–Arg169.

Belongs to the non-flavoprotein flavin reductase family.

It carries out the reaction a reduced flavin + NAD(+) = an oxidized flavin + NADH + 2 H(+). Catalyzes the reduction of flavin by NADH. Subsequently, the reduced flavins is transferred to the tetracycline 7-halogenase CtcP. This chain is Flavin reductase (NADH), found in Kitasatospora aureofaciens (Streptomyces aureofaciens).